The sequence spans 416 residues: Chorismate synthase (416 aa).

NADP(+)-binding residues include Arg-40 and Arg-46. FMN contacts are provided by residues 135-137 (RAS), 256-257 (QA), Gly-300, 315-319 (KPIAT), and Arg-341.

This sequence belongs to the chorismate synthase family. In terms of assembly, homotetramer. FMNH2 is required as a cofactor.

It carries out the reaction 5-O-(1-carboxyvinyl)-3-phosphoshikimate = chorismate + phosphate. Its pathway is metabolic intermediate biosynthesis; chorismate biosynthesis; chorismate from D-erythrose 4-phosphate and phosphoenolpyruvate: step 7/7. In terms of biological role, catalyzes the anti-1,4-elimination of the C-3 phosphate and the C-6 proR hydrogen from 5-enolpyruvylshikimate-3-phosphate (EPSP) to yield chorismate, which is the branch point compound that serves as the starting substrate for the three terminal pathways of aromatic amino acid biosynthesis. This reaction introduces a second double bond into the aromatic ring system. The polypeptide is Chorismate synthase (Kocuria rhizophila (strain ATCC 9341 / DSM 348 / NBRC 103217 / DC2201)).